Here is a 399-residue protein sequence, read N- to C-terminus: Pyridinium-3,5-bisthiocarboxylic acid mononucleotide nickel insertion protein (399 aa).

Belongs to the LarC family.

The enzyme catalyses Ni(II)-pyridinium-3,5-bisthiocarboxylate mononucleotide = pyridinium-3,5-bisthiocarboxylate mononucleotide + Ni(2+). Functionally, involved in the biosynthesis of a nickel-pincer cofactor ((SCS)Ni(II) pincer complex). Binds Ni(2+), and functions in nickel delivery to pyridinium-3,5-bisthiocarboxylic acid mononucleotide (P2TMN), to form the mature cofactor. Is thus probably required for the activation of nickel-pincer cofactor-dependent enzymes. The protein is Pyridinium-3,5-bisthiocarboxylic acid mononucleotide nickel insertion protein of Clostridium kluyveri (strain ATCC 8527 / DSM 555 / NBRC 12016 / NCIMB 10680 / K1).